Here is a 324-residue protein sequence, read N- to C-terminus: DNA-directed RNA polymerase subunit alpha (324 aa).

The interval 1 to 230 is alpha N-terminal domain (alpha-NTD); the sequence is MQSSGLLKPR…EQLSVFADLE (230 aa). An alpha C-terminal domain (alpha-CTD) region spans residues 244–324; that stretch reads VDPVLLRPVD…NWPPAGLEKA (81 aa).

This sequence belongs to the RNA polymerase alpha chain family. In terms of assembly, homodimer. The RNAP catalytic core consists of 2 alpha, 1 beta, 1 beta' and 1 omega subunit. When a sigma factor is associated with the core the holoenzyme is formed, which can initiate transcription.

It carries out the reaction RNA(n) + a ribonucleoside 5'-triphosphate = RNA(n+1) + diphosphate. In terms of biological role, DNA-dependent RNA polymerase catalyzes the transcription of DNA into RNA using the four ribonucleoside triphosphates as substrates. The chain is DNA-directed RNA polymerase subunit alpha from Dechloromonas aromatica (strain RCB).